Consider the following 88-residue polypeptide: MIASSIKAAVVKDNARQPGDTGSPEVQVALLTARINELMPHFKTHAKDHHGRRGLLRMVSRRRKLLDYLKSKDAERYIALIAKLGLRK.

Belongs to the universal ribosomal protein uS15 family. In terms of assembly, part of the 30S ribosomal subunit. Forms a bridge to the 50S subunit in the 70S ribosome, contacting the 23S rRNA.

Its function is as follows. One of the primary rRNA binding proteins, it binds directly to 16S rRNA where it helps nucleate assembly of the platform of the 30S subunit by binding and bridging several RNA helices of the 16S rRNA. In terms of biological role, forms an intersubunit bridge (bridge B4) with the 23S rRNA of the 50S subunit in the ribosome. This Albidiferax ferrireducens (strain ATCC BAA-621 / DSM 15236 / T118) (Rhodoferax ferrireducens) protein is Small ribosomal subunit protein uS15.